Here is a 335-residue protein sequence, read N- to C-terminus: Aliphatic sulfonates import ATP-binding protein SsuB (335 aa).

The disordered stretch occupies residues 48 to 71 (PFASGGAFGRAPRDDDDDRRGAGD). Residues 74-293 (VRLTRVSKRY…ARASAAFAEL (220 aa)) enclose the ABC transporter domain. 106–113 (GRSGCGKS) contributes to the ATP binding site.

This sequence belongs to the ABC transporter superfamily. Aliphatic sulfonates importer (TC 3.A.1.17.2) family. The complex is composed of two ATP-binding proteins (SsuB), two transmembrane proteins (SsuC) and a solute-binding protein (SsuA).

The protein localises to the cell inner membrane. The enzyme catalyses ATP + H2O + aliphatic sulfonate-[sulfonate-binding protein]Side 1 = ADP + phosphate + aliphatic sulfonateSide 2 + [sulfonate-binding protein]Side 1.. In terms of biological role, part of the ABC transporter complex SsuABC involved in aliphatic sulfonates import. Responsible for energy coupling to the transport system. The chain is Aliphatic sulfonates import ATP-binding protein SsuB from Burkholderia thailandensis (strain ATCC 700388 / DSM 13276 / CCUG 48851 / CIP 106301 / E264).